Consider the following 1101-residue polypeptide: Type II inositol polyphosphate 5-phosphatase 15 (1101 aa).

Low complexity predominate over residues 31–40 (RSAYSSSSSS). The segment at 31–54 (RSAYSSSSSSGDDESQPSVDDSNK) is disordered. WD repeat units follow at residues 121-162 (LRET…GSGR), 180-219 (FGSA…GIEE), 225-263 (AHRG…GKSL), 403-432 (DDSR…MRWD), 433-481 (GNGN…GGWV), and 483-519 (HSGP…PLDN). Catalytic regions lie at residues 749-765 (DMVI…DDIT) and 828-843 (KKRI…YRDN). A Glycyl lysine isopeptide (Lys-Gly) (interchain with G-Cter in ubiquitin) cross-link involves residue Lys-907.

This sequence belongs to the inositol polyphosphate 5-phosphatase family. Requires Mg(2+) as cofactor. In terms of tissue distribution, predominantly expressed in interfascicular fibers and vascular bundles. Expressed in seedlings, stems, roots and flowers. Expressed at lower level in mature leaves.

The catalysed reaction is a 1,2-diacyl-sn-glycero-3-phospho-(1D-myo-inositol-4,5-bisphosphate) + H2O = a 1,2-diacyl-sn-glycero-3-phospho-(1D-myo-inositol 4-phosphate) + phosphate. The enzyme catalyses a 1,2-diacyl-sn-glycero-3-phospho-(1D-myo-inositol-3,4,5-trisphosphate) + H2O = a 1,2-diacyl-sn-glycero-3-phospho-(1D-myo-inositol-3,4-bisphosphate) + phosphate. It catalyses the reaction 1D-myo-inositol 1,4,5-trisphosphate + H2O = 1D-myo-inositol 1,4-bisphosphate + phosphate. Functionally, has phosphatase activity toward PtdIns(4,5)P2, PtdIns(3,4,5)P3 and Ins(1,4,5)P3. Has a higher substrate affinity toward PtdIns(4,5)P2. Required for secondary wall synthesis and actin organization in fiber cells. The chain is Type II inositol polyphosphate 5-phosphatase 15 from Arabidopsis thaliana (Mouse-ear cress).